We begin with the raw amino-acid sequence, 742 residues long: Photosystem I P700 chlorophyll a apoprotein A2 (742 aa).

The next 8 membrane-spanning stretches (helical) occupy residues L46 to A69, L135 to Q158, L175 to I199, I273 to Y291, L336 to G359, S375 to V401, A423 to H445, and F525 to I543. [4Fe-4S] cluster is bound by residues C567 and C576. The next 2 membrane-spanning stretches (helical) occupy residues A583–W604 and L651–I673. Divinyl chlorophyll a contacts are provided by H662, M670, and Y678. W679 lines the phylloquinone pocket. A helical transmembrane segment spans residues L715 to A735.

It belongs to the PsaA/PsaB family. In terms of assembly, the PsaA/B heterodimer binds the P700 divinyl chlorophyll special pair and subsequent electron acceptors. PSI consists of a core antenna complex that captures photons, and an electron transfer chain that converts photonic excitation into a charge separation. The cyanobacterial PSI reaction center is composed of one copy each of PsaA,B,C,D,E,F,I,J,K,L,M and X, and forms trimeric complexes. The cofactor is PSI electron transfer chain: 5 divinyl chlorophyll a, 1 divinyl chlorophyll a', 2 phylloquinones and 3 4Fe-4S clusters. PSI core antenna: 90 divinyl chlorophyll a, 22 carotenoids, 3 phospholipids and 1 galactolipid. P700 is a divinyl chlorophyll a/divinyl chlorophyll a' dimer, A0 is one or more divinyl chlorophyll a, A1 is one or both phylloquinones and FX is a shared 4Fe-4S iron-sulfur center..

The protein localises to the cellular thylakoid membrane. It carries out the reaction reduced [plastocyanin] + hnu + oxidized [2Fe-2S]-[ferredoxin] = oxidized [plastocyanin] + reduced [2Fe-2S]-[ferredoxin]. In terms of biological role, psaA and PsaB bind P700, the primary electron donor of photosystem I (PSI), as well as the electron acceptors A0, A1 and FX. PSI is a plastocyanin/cytochrome c6-ferredoxin oxidoreductase, converting photonic excitation into a charge separation, which transfers an electron from the donor P700 chlorophyll pair to the spectroscopically characterized acceptors A0, A1, FX, FA and FB in turn. Oxidized P700 is reduced on the lumenal side of the thylakoid membrane by plastocyanin or cytochrome c6. In Prochlorococcus marinus (strain MIT 9312), this protein is Photosystem I P700 chlorophyll a apoprotein A2.